Here is a 667-residue protein sequence, read N- to C-terminus: E3 ubiquitin-protein ligase Midline-1 (667 aa).

An RING-type zinc finger spans residues 10 to 60; it reads CPICLELFEDPLLLPCAHSLCFNCAHRILVSHCATNESVESITAFQCPTCR. Residues serine 92 and serine 96 each carry the phosphoserine modification. B box-type zinc fingers lie at residues 116–165 and 172–212; these read KVLC…IEPI and GLMC…VAAL. Zn(2+) contacts are provided by cysteine 119, cysteine 122, cysteine 134, cysteine 137, cysteine 142, cysteine 145, histidine 150, histidine 159, cysteine 175, histidine 178, cysteine 198, and histidine 204. A coiled-coil region spans residues 205–264; sequence RDHQVAALSERYDKLKQNLESNLTNLIKRNTELETLLAKLIQTCQHVEVNASRQEAKLTE. Residues 320-379 form the COS domain; it reads LKENDHARFLQTAKNITERVSMATASSQVLIPEINLNDTFDTFALDFSREKKLLECLDYL. The Fibronectin type-III domain occupies 381–484; the sequence is APNPPTIREE…EPGKLKTNSQ (104 aa). Positions 471 to 485 are enriched in polar residues; it reads SRSSEPGKLKTNSQP. A disordered region spans residues 471–524; sequence SRSSEPGKLKTNSQPFKLDPKSAHRKLKVSHDNLTVERDESSSKKSHTPERFTS. In terms of domain architecture, B30.2/SPRY spans 482 to 659; sequence NSQPFKLDPK…IITGLPIPDH (178 aa). Basic and acidic residues predominate over residues 499–520; that stretch reads VSHDNLTVERDESSSKKSHTPE. Serine 511 is subject to Phosphoserine.

It belongs to the TRIM/RBCC family. As to quaternary structure, homodimer or heterodimer with MID2. Interacts with IGBP1. Interacts with TRIM16. In terms of processing, phosphorylated on serine and threonine residues. In terms of tissue distribution, in the fetus, highest expression found in kidney, followed by brain and lung. Expressed at low levels in fetal liver. In the adult, most abundant in heart, placenta and brain.

It is found in the cytoplasm. The protein localises to the cytoskeleton. It localises to the spindle. The catalysed reaction is S-ubiquitinyl-[E2 ubiquitin-conjugating enzyme]-L-cysteine + [acceptor protein]-L-lysine = [E2 ubiquitin-conjugating enzyme]-L-cysteine + N(6)-ubiquitinyl-[acceptor protein]-L-lysine.. Functionally, has E3 ubiquitin ligase activity towards IGBP1, promoting its monoubiquitination, which results in deprotection of the catalytic subunit of protein phosphatase PP2A, and its subsequent degradation by polyubiquitination. The protein is E3 ubiquitin-protein ligase Midline-1 (MID1) of Homo sapiens (Human).